Reading from the N-terminus, the 550-residue chain is MPKILTFNEDARHALERGVNALADVVKVTIGPRGRNVVIDQSYGAATITNDGVTIARLVELEDPYENLGAQLAKEVATKTNDVAGDGTTTATVLAQAMVRFGLKQVTAGAAPLSLKLGIEAAVEAVSAALLEQAIEVSSRQTIAQVAAISAQDTQVGELIAEAIDKIGKDGVITVEESQTLGLDLELTEGMQFDKGYISPYFVTDADSQEAILEDAYVLLYPGKISALNEILPILEQVVQERKPLLIIAEDIEGEALSTLVVNSIRKTFQVVAVKAPGFGDRRKALLQDIAVLTGGQVVAGEVGLSLDAVTLADLGRARRVVVDKENTTIVDGGGEADAVADRVRQLKAEIETSDSDWDREKLQERLAKLAGGVAVIRVGAATEVELKEKKHRLEDAVSATRAAIEEGIVAGGGAALAHVTSVLDDGLGRTGDELAGVRIVRTALDAPLNWIARNAGLEGAVIVARVKDLAPGHGYNAATGEYTDLIAAGVIDPVKVTRSAVANAASIAALLITTESLVVEKPAVSDGDHGHSHGHGHSHGHSHPQGPGF.

ATP contacts are provided by residues threonine 29 to proline 32, aspartate 86 to threonine 90, glycine 413, asparagine 477 to alanine 479, and aspartate 493. A disordered region spans residues alanine 524–phenylalanine 550. Basic residues predominate over residues serine 533 to serine 543.

The protein belongs to the chaperonin (HSP60) family. Forms a cylinder of 14 subunits composed of two heptameric rings stacked back-to-back. Interacts with the co-chaperonin GroES.

The protein localises to the cytoplasm. It catalyses the reaction ATP + H2O + a folded polypeptide = ADP + phosphate + an unfolded polypeptide.. Functionally, together with its co-chaperonin GroES, plays an essential role in assisting protein folding. The GroEL-GroES system forms a nano-cage that allows encapsulation of the non-native substrate proteins and provides a physical environment optimized to promote and accelerate protein folding. The chain is Chaperonin GroEL 1 from Frankia alni (strain DSM 45986 / CECT 9034 / ACN14a).